The following is a 912-amino-acid chain: Transferrin-binding protein A (912 aa).

Residues 1 to 23 form the signal peptide; sequence MTKKPYFRLSIISCLLISCYVKA. The short motif at 50–57 is the TonB box element; that stretch reads ETISVTAE. Residues 63–188 form the TBDR plug domain; it reads KDNEVTGLGK…LAGSVTFQSK (126 aa). The TBDR beta-barrel domain maps to 199 to 912; sequence SWGIQTKNAY…NYTLTLEMKF (714 aa). Positions 895-912 match the TonB C-terminal box motif; that stretch reads TRYAASGRNYTLTLEMKF.

The protein belongs to the TonB-dependent receptor family.

It localises to the cell outer membrane. Its function is as follows. Haemophilus acquires iron by extracting it from serum transferrin (TF) in its human host. Acts as a transferrin receptor and is required for transferrin utilization. The protein is Transferrin-binding protein A of Haemophilus influenzae (strain ATCC 51907 / DSM 11121 / KW20 / Rd).